The chain runs to 247 residues: Probable transcriptional regulatory protein Swit_2142 (247 aa).

The segment covering 1 to 14 (MAGHSKFKNIMHRK) has biased composition (basic residues). The interval 1-21 (MAGHSKFKNIMHRKGAQDKKR) is disordered.

The protein belongs to the TACO1 family.

The protein resides in the cytoplasm. This chain is Probable transcriptional regulatory protein Swit_2142, found in Rhizorhabdus wittichii (strain DSM 6014 / CCUG 31198 / JCM 15750 / NBRC 105917 / EY 4224 / RW1) (Sphingomonas wittichii).